A 138-amino-acid polypeptide reads, in one-letter code: Large ribosomal subunit protein uL16 (138 aa).

The segment covering 1–13 (MLQPARRKYRKEQ) has biased composition (basic residues). Positions 1–22 (MLQPARRKYRKEQKGRNTGIAT) are disordered.

This sequence belongs to the universal ribosomal protein uL16 family. As to quaternary structure, part of the 50S ribosomal subunit.

Functionally, binds 23S rRNA and is also seen to make contacts with the A and possibly P site tRNAs. The protein is Large ribosomal subunit protein uL16 of Delftia acidovorans (strain DSM 14801 / SPH-1).